Here is a 313-residue protein sequence, read N- to C-terminus: Porphobilinogen deaminase (313 aa).

Residue C242 is modified to S-(dipyrrolylmethanemethyl)cysteine.

This sequence belongs to the HMBS family. In terms of assembly, monomer. The cofactor is dipyrromethane.

It carries out the reaction 4 porphobilinogen + H2O = hydroxymethylbilane + 4 NH4(+). Its pathway is porphyrin-containing compound metabolism; protoporphyrin-IX biosynthesis; coproporphyrinogen-III from 5-aminolevulinate: step 2/4. Its function is as follows. Tetrapolymerization of the monopyrrole PBG into the hydroxymethylbilane pre-uroporphyrinogen in several discrete steps. This chain is Porphobilinogen deaminase, found in Escherichia coli O45:K1 (strain S88 / ExPEC).